The following is a 373-amino-acid chain: 5-amino-6-(5-phospho-D-ribitylamino)uracil phosphatase, chloroplastic (373 aa).

Belongs to the HAD-like hydrolase superfamily. DOG/GPP family. As to quaternary structure, homodimer. Mg(2+) is required as a cofactor.

It is found in the plastid. Its subcellular location is the chloroplast. It catalyses the reaction 5-amino-6-(5-phospho-D-ribitylamino)uracil + H2O = 5-amino-6-(D-ribitylamino)uracil + phosphate. Functionally, catalyzes the dephosphorylation of 5-amino-6-(5-phospho-D-ribitylamino)uracil, also known as ARPP, but has no activity toward flavin mononucleotide (FMN). This chain is 5-amino-6-(5-phospho-D-ribitylamino)uracil phosphatase, chloroplastic, found in Arabidopsis thaliana (Mouse-ear cress).